A 106-amino-acid chain; its full sequence is Small ribosomal subunit protein mS33 (106 aa).

Position 2 is an N-acetylserine (Ser2). The segment covering 85–94 (LKKLRGKVKP) has biased composition (basic residues). A disordered region spans residues 85 to 106 (LKKLRGKVKPRKGEGKRAAKKK). The segment covering 95-106 (RKGEGKRAAKKK) has biased composition (basic and acidic residues).

This sequence belongs to the mitochondrion-specific ribosomal protein mS33 family. Component of the mitochondrial ribosome small subunit (28S) which comprises a 12S rRNA and about 30 distinct proteins.

The protein localises to the mitochondrion. The protein is Small ribosomal subunit protein mS33 of Bos taurus (Bovine).